The chain runs to 454 residues: tRNA modification GTPase MnmE (454 aa).

Arg-23, Glu-80, and Lys-120 together coordinate (6S)-5-formyl-5,6,7,8-tetrahydrofolate. A TrmE-type G domain is found at 216–377 (GMKVVIAGRP…LRNHLKQSMG (162 aa)). Asn-226 lines the K(+) pocket. GTP-binding positions include 226-231 (NAGKSS), 245-251 (TDIAGTT), 270-273 (DTAG), 335-338 (NKAD), and 358-360 (SAR). Residue Ser-230 coordinates Mg(2+). The K(+) site is built by Thr-245, Ile-247, and Thr-250. Thr-251 is a binding site for Mg(2+). Lys-454 is a (6S)-5-formyl-5,6,7,8-tetrahydrofolate binding site.

This sequence belongs to the TRAFAC class TrmE-Era-EngA-EngB-Septin-like GTPase superfamily. TrmE GTPase family. In terms of assembly, homodimer. Heterotetramer of two MnmE and two MnmG subunits. K(+) serves as cofactor.

Its subcellular location is the cytoplasm. Exhibits a very high intrinsic GTPase hydrolysis rate. Involved in the addition of a carboxymethylaminomethyl (cmnm) group at the wobble position (U34) of certain tRNAs, forming tRNA-cmnm(5)s(2)U34. The sequence is that of tRNA modification GTPase MnmE from Enterobacter sp. (strain 638).